The chain runs to 352 residues: Ion-translocating oxidoreductase complex subunit D (352 aa).

The next 5 membrane-spanning stretches (helical) occupy residues 20–40, 42–62, 78–109, 123–143, and 148–168; these read IMLL…WFFG, GTLV…ALVL, ALLT…VIIA, PAMI…TSWL, and IAVN…GHTA. The residue at position 187 (threonine 187) is an FMN phosphoryl threonine. 5 helical membrane passes run 214-234, 242-262, 267-287, 301-321, and 322-342; these read ILAG…GVWL, WHIP…GWLF, LAAP…FFIL, LIFG…GGYP, and DGVA…DYYT.

The protein belongs to the NqrB/RnfD family. As to quaternary structure, the complex is composed of six subunits: RsxA, RsxB, RsxC, RsxD, RsxE and RsxG. Requires FMN as cofactor.

It localises to the cell inner membrane. In terms of biological role, part of a membrane-bound complex that couples electron transfer with translocation of ions across the membrane. Required to maintain the reduced state of SoxR. In Escherichia coli O157:H7, this protein is Ion-translocating oxidoreductase complex subunit D.